Reading from the N-terminus, the 362-residue chain is MASLINVSSLVNRVKLDQSIIGSDEINKLYGSDAPLVFKDEVKMVIPGNAEGEAIKLQANILTADRLQSIRNAKVNGKEAAYLHLGFVPIAIRSLLPSGNEQIWGRCALVDTSRTRAETAVIDEFEFKFTKKQPFAAKLLTINAAVDINCKVSVGSIQVLLELHGVDLREERSVAAIITGLTCTPTNKMVLLHKIECDTPKWSLCNIIEQVEDEEESKKAFENMFNASSSNLIDLGQEQWLDEGKRTPLIGSLAIKGFGRKVMPVRRRNLTTRNLMKDYVSHVKSETASLKRSQSGRDWGNDRLRKYLEEQALEQARSSTDHQLVKAPKFKTIEVTGLETVHDLKDKIDKAESSTASDTGTK.

Suppressor of viral-induced RNA silencing. The chain is Putative movement protein from Citrus (CLBV).